The primary structure comprises 509 residues: tRNA-2-methylthio-N(6)-dimethylallyladenosine synthase (509 aa).

A compositionally biased stretch (polar residues) spans 1–15; sequence MNEQQRLASQQANSS. A disordered region spans residues 1–25; it reads MNEQQRLASQQANSSTKKEEKDYSK. Over residues 16–25 the composition is skewed to basic and acidic residues; sequence TKKEEKDYSK. Residues 66-184 form the MTTase N-terminal domain; the sequence is RKFYIRTYGC…LPYILKDAMF (119 aa). 6 residues coordinate [4Fe-4S] cluster: cysteine 75, cysteine 111, cysteine 145, cysteine 221, cysteine 225, and cysteine 228. A Radical SAM core domain is found at 207–437; that stretch reads RRGDIKAWVN…NTLVNTLAIE (231 aa). In terms of domain architecture, TRAM spans 440 to 503; that stretch reads SRYKGQIVEV…TWSLNGELVE (64 aa).

This sequence belongs to the methylthiotransferase family. MiaB subfamily. Monomer. [4Fe-4S] cluster is required as a cofactor.

Its subcellular location is the cytoplasm. It carries out the reaction N(6)-dimethylallyladenosine(37) in tRNA + (sulfur carrier)-SH + AH2 + 2 S-adenosyl-L-methionine = 2-methylsulfanyl-N(6)-dimethylallyladenosine(37) in tRNA + (sulfur carrier)-H + 5'-deoxyadenosine + L-methionine + A + S-adenosyl-L-homocysteine + 2 H(+). In terms of biological role, catalyzes the methylthiolation of N6-(dimethylallyl)adenosine (i(6)A), leading to the formation of 2-methylthio-N6-(dimethylallyl)adenosine (ms(2)i(6)A) at position 37 in tRNAs that read codons beginning with uridine. The protein is tRNA-2-methylthio-N(6)-dimethylallyladenosine synthase of Bacillus cereus (strain B4264).